We begin with the raw amino-acid sequence, 167 residues long: Small ribosomal subunit protein uS5 (167 aa).

An S5 DRBM domain is found at L12–V75.

Belongs to the universal ribosomal protein uS5 family. In terms of assembly, part of the 30S ribosomal subunit. Contacts proteins S4 and S8.

Its function is as follows. With S4 and S12 plays an important role in translational accuracy. Functionally, located at the back of the 30S subunit body where it stabilizes the conformation of the head with respect to the body. The sequence is that of Small ribosomal subunit protein uS5 from Halorhodospira halophila (strain DSM 244 / SL1) (Ectothiorhodospira halophila (strain DSM 244 / SL1)).